The primary structure comprises 123 residues: Small ribosomal subunit protein uS12 (123 aa).

The disordered stretch occupies residues 1-29 (MPTINQLVRKGRVPQKAKSKVPAMEQNPQ). The span at 9 to 19 (RKGRVPQKAKS) shows a compositional bias: basic residues. 3-methylthioaspartic acid is present on Asp-89.

It belongs to the universal ribosomal protein uS12 family. In terms of assembly, part of the 30S ribosomal subunit. Contacts proteins S8 and S17. May interact with IF1 in the 30S initiation complex.

Its function is as follows. With S4 and S5 plays an important role in translational accuracy. Interacts with and stabilizes bases of the 16S rRNA that are involved in tRNA selection in the A site and with the mRNA backbone. Located at the interface of the 30S and 50S subunits, it traverses the body of the 30S subunit contacting proteins on the other side and probably holding the rRNA structure together. The combined cluster of proteins S8, S12 and S17 appears to hold together the shoulder and platform of the 30S subunit. This is Small ribosomal subunit protein uS12 from Erythrobacter litoralis (strain HTCC2594).